Here is a 609-residue protein sequence, read N- to C-terminus: UvrABC system protein C (609 aa).

A GIY-YIG domain is found at 16–94; that stretch reads SSAGVYRMYD…IKQYMPKYNV (79 aa). The region spanning 203–238 is the UVR domain; the sequence is QQVISALVDKMELAAERQAYEQAARFRDQIMALRKV.

It belongs to the UvrC family. In terms of assembly, interacts with UvrB in an incision complex.

It localises to the cytoplasm. In terms of biological role, the UvrABC repair system catalyzes the recognition and processing of DNA lesions. UvrC both incises the 5' and 3' sides of the lesion. The N-terminal half is responsible for the 3' incision and the C-terminal half is responsible for the 5' incision. The sequence is that of UvrABC system protein C from Shewanella baltica (strain OS155 / ATCC BAA-1091).